Here is a 429-residue protein sequence, read N- to C-terminus: Glutamate-1-semialdehyde 2,1-aminomutase (429 aa).

Lysine 265 is modified (N6-(pyridoxal phosphate)lysine).

The protein belongs to the class-III pyridoxal-phosphate-dependent aminotransferase family. HemL subfamily. Homodimer. Pyridoxal 5'-phosphate is required as a cofactor.

The protein localises to the cytoplasm. The enzyme catalyses (S)-4-amino-5-oxopentanoate = 5-aminolevulinate. The protein operates within porphyrin-containing compound metabolism; protoporphyrin-IX biosynthesis; 5-aminolevulinate from L-glutamyl-tRNA(Glu): step 2/2. This is Glutamate-1-semialdehyde 2,1-aminomutase from Legionella pneumophila subsp. pneumophila (strain Philadelphia 1 / ATCC 33152 / DSM 7513).